We begin with the raw amino-acid sequence, 106 residues long: UPF0145 protein SCO3412 (106 aa).

It belongs to the UPF0145 family.

This Streptomyces coelicolor (strain ATCC BAA-471 / A3(2) / M145) protein is UPF0145 protein SCO3412.